A 445-amino-acid chain; its full sequence is Tubulin beta-1 chain (445 aa).

An MREI motif motif is present at residues 1–4 (MREI). GTP-binding residues include Q11, E69, S138, G142, T143, G144, N204, and N226. Position 69 (E69) interacts with Mg(2+). Residues 425-445 (YQDATAEEEGEFEEEGEEELA) form a disordered region. Positions 429–445 (TAEEEGEFEEEGEEELA) are enriched in acidic residues. 5-glutamyl polyglutamate is present on E438.

The protein belongs to the tubulin family. Dimer of alpha and beta chains. A typical microtubule is a hollow water-filled tube with an outer diameter of 25 nm and an inner diameter of 15 nM. Alpha-beta heterodimers associate head-to-tail to form protofilaments running lengthwise along the microtubule wall with the beta-tubulin subunit facing the microtubule plus end conferring a structural polarity. Microtubules usually have 13 protofilaments but different protofilament numbers can be found in some organisms and specialized cells. Mg(2+) serves as cofactor. In terms of processing, some glutamate residues at the C-terminus are polyglycylated, resulting in polyglycine chains on the gamma-carboxyl group. Glycylation is mainly limited to tubulin incorporated into axonemes (cilia and flagella) whereas glutamylation is prevalent in neuronal cells, centrioles, axonemes, and the mitotic spindle. Both modifications can coexist on the same protein on adjacent residues, and lowering polyglycylation levels increases polyglutamylation, and reciprocally. The precise function of polyglycylation is still unclear. Post-translationally, some glutamate residues at the C-terminus are polyglutamylated, resulting in polyglutamate chains on the gamma-carboxyl group. Polyglutamylation plays a key role in microtubule severing by spastin (SPAST). SPAST preferentially recognizes and acts on microtubules decorated with short polyglutamate tails: severing activity by SPAST increases as the number of glutamates per tubulin rises from one to eight, but decreases beyond this glutamylation threshold.

The protein resides in the cytoplasm. It localises to the cytoskeleton. In terms of biological role, tubulin is the major constituent of microtubules, a cylinder consisting of laterally associated linear protofilaments composed of alpha- and beta-tubulin heterodimers. Microtubules grow by the addition of GTP-tubulin dimers to the microtubule end, where a stabilizing cap forms. Below the cap, tubulin dimers are in GDP-bound state, owing to GTPase activity of alpha-tubulin. The chain is Tubulin beta-1 chain from Gadus morhua (Atlantic cod).